A 218-amino-acid polypeptide reads, in one-letter code: Thiamine-phosphate synthase (218 aa).

4-amino-2-methyl-5-(diphosphooxymethyl)pyrimidine is bound by residues 46–50 and Asp83; that span reads QFRDK. Residues Asp84 and Asp103 each coordinate Mg(2+). Residue Ser122 coordinates 4-amino-2-methyl-5-(diphosphooxymethyl)pyrimidine. 149 to 151 lines the 2-[(2R,5Z)-2-carboxy-4-methylthiazol-5(2H)-ylidene]ethyl phosphate pocket; that stretch reads TNS. Lys152 contacts 4-amino-2-methyl-5-(diphosphooxymethyl)pyrimidine. Residues Gly181 and 201–202 contribute to the 2-[(2R,5Z)-2-carboxy-4-methylthiazol-5(2H)-ylidene]ethyl phosphate site; that span reads IT.

The protein belongs to the thiamine-phosphate synthase family. The cofactor is Mg(2+).

It catalyses the reaction 2-[(2R,5Z)-2-carboxy-4-methylthiazol-5(2H)-ylidene]ethyl phosphate + 4-amino-2-methyl-5-(diphosphooxymethyl)pyrimidine + 2 H(+) = thiamine phosphate + CO2 + diphosphate. The enzyme catalyses 2-(2-carboxy-4-methylthiazol-5-yl)ethyl phosphate + 4-amino-2-methyl-5-(diphosphooxymethyl)pyrimidine + 2 H(+) = thiamine phosphate + CO2 + diphosphate. The catalysed reaction is 4-methyl-5-(2-phosphooxyethyl)-thiazole + 4-amino-2-methyl-5-(diphosphooxymethyl)pyrimidine + H(+) = thiamine phosphate + diphosphate. The protein operates within cofactor biosynthesis; thiamine diphosphate biosynthesis; thiamine phosphate from 4-amino-2-methyl-5-diphosphomethylpyrimidine and 4-methyl-5-(2-phosphoethyl)-thiazole: step 1/1. In terms of biological role, condenses 4-methyl-5-(beta-hydroxyethyl)thiazole monophosphate (THZ-P) and 2-methyl-4-amino-5-hydroxymethyl pyrimidine pyrophosphate (HMP-PP) to form thiamine monophosphate (TMP). The sequence is that of Thiamine-phosphate synthase from Actinobacillus pleuropneumoniae serotype 7 (strain AP76).